The chain runs to 307 residues: Dioxygenase swnH1 (307 aa).

Residues His149, Asp151, and His227 each coordinate Fe cation.

The protein belongs to the PhyH family. Homodimer. Requires Fe cation as cofactor.

The protein operates within mycotoxin biosynthesis. Functionally, dioxygenase; part of the gene cluster that mediates the biosynthesis of swainsonine (SW), a cytotoxic fungal alkaloid and a potential cancer therapy drug. Swainsonine production occurs via a multibranched pathway and is dispensable for fungal colonization of plants and infection of insect hosts. The first step of swainsonine biosynthesis is the production of the precursor pipecolic acid (PA) via conversion of L-lysine (Lys) to 1-piperideine-6-carboxylate (P6C) by the aminotransferase swnA, the latter being further reduced to PA by the reductase swnR. The PKS-NRPS hybrid synthetase swnK uptakes and condensates PA and malonyl-CoA with and without skipping of the ketoreductase (KR) domain in order to produce 3 intermediates, 1-oxoindolizidine, (1S)-1-hydroxyindolizin, and (1R)-1-hydroxyindolizine; with the transisomer (1S)-1-hydroxyindolizin being predominant. The terminal thioester reductase (TE) domain of swnK is involved in reduction of the thioester bond to release the intermediate aldehydes. The oxidoreductase swnN could contribute to the reduction of 1-oxoindolizidine to (1S)-1-hydroxyindolizin and (1R)-1-hydroxyindolizine, contributing to the major route of SW production. The dioxygenase swnH2 would be responsible for the oxidization of (1R)-1-hydroxyindolizine into (1R,2S)-1,2-dihydroxyindolizine and of (1S)-1-hydroxyindolizin to yield both (1R,2S)-1,2-dihydroxyindolizine and (1S,2S)-1,2-dihydroxyindolizine. The dioxygenase swnH1 then performs the conversion of the 1,2-dihydroxyindolizine epimers to SW. The polypeptide is Dioxygenase swnH1 (Arthroderma benhamiae (strain ATCC MYA-4681 / CBS 112371) (Trichophyton mentagrophytes)).